Reading from the N-terminus, the 154-residue chain is Large ribosomal subunit protein uL15 (154 aa).

Residues 1–13 (MKLNELRDHEGAT) are compositionally biased toward basic and acidic residues. The segment at 1–44 (MKLNELRDHEGATKNRKRIGRGIGSGTGKTGGCGVKGQKSRSGV) is disordered. Gly residues predominate over residues 21 to 35 (RGIGSGTGKTGGCGV).

The protein belongs to the universal ribosomal protein uL15 family. In terms of assembly, part of the 50S ribosomal subunit.

Binds to the 23S rRNA. The protein is Large ribosomal subunit protein uL15 of Bartonella bacilliformis (strain ATCC 35685 / KC583 / Herrer 020/F12,63).